Consider the following 451-residue polypeptide: Phosphoglucosamine mutase (451 aa).

The active-site Phosphoserine intermediate is Ser-102. Positions 102, 243, 245, and 247 each coordinate Mg(2+). Ser-102 is subject to Phosphoserine.

It belongs to the phosphohexose mutase family. Requires Mg(2+) as cofactor. Post-translationally, activated by phosphorylation.

The enzyme catalyses alpha-D-glucosamine 1-phosphate = D-glucosamine 6-phosphate. Catalyzes the conversion of glucosamine-6-phosphate to glucosamine-1-phosphate. The polypeptide is Phosphoglucosamine mutase (Paramagnetospirillum magneticum (strain ATCC 700264 / AMB-1) (Magnetospirillum magneticum)).